The primary structure comprises 166 residues: EndA-like protein (166 aa).

It belongs to the tRNA-intron endonuclease family. Archaeal short subfamily.

The protein is EndA-like protein of Methanopyrus kandleri (strain AV19 / DSM 6324 / JCM 9639 / NBRC 100938).